A 1128-amino-acid polypeptide reads, in one-letter code: Cordon-bleu protein-like 1 (1128 aa).

Residues 1–35 (MDGRTPRPQDAPARRKPKAKAPLPPAETKYTDVSS) are disordered. T139 is subject to Phosphothreonine. 3 positions are modified to phosphoserine: S204, S222, and S256. 3 disordered regions span residues 249–309 (KKRD…VPQD), 325–441 (MSVD…SPKS), and 454–499 (TLKN…TSNG). The residue at position 260 (T260) is a Phosphothreonine. Polar residues predominate over residues 270–286 (FTRSNTISKPYISNTLP). Phosphoserine is present on S273. Position 284 is a phosphothreonine (T284). The KKRRAP 1 motif lies at 291–296 (KKRRAP). S326, S333, S344, and S356 each carry phosphoserine. A compositionally biased stretch (polar residues) spans 345 to 357 (LQLSSMSAGNSSL). Residues 360 to 365 (TKRKAP) carry the KKRRAP 2 motif. The segment covering 397-415 (SEANSPEELSSPAGISSDY) has biased composition (polar residues). A compositionally biased stretch (acidic residues) spans 416 to 425 (SLEEIDEKEE). Phosphoserine occurs at positions 438, 441, 461, 471, and 474. Basic and acidic residues predominate over residues 475 to 488 (MEEKQETKSTDGQE). Residues S563, S584, S786, S813, S814, and S821 each carry the phosphoserine modification. 4 disordered regions span residues 780–840 (TEDS…PFAP), 882–964 (SAAA…SQVS), 995–1081 (RSQS…PEQM), and 1103–1128 (IPSN…QDGH). Over residues 899-908 (LTNKEAERDM) the composition is skewed to basic and acidic residues. Residues S911, S917, S947, S1069, and S1070 each carry the phosphoserine modification. 2 stretches are compositionally biased toward polar residues: residues 1045-1081 (SAHN…PEQM) and 1103-1122 (IPSN…SMSP). The WH2 domain maps to 1081–1101 (MRQSLLTAIRSGEAAAKLKRV). A Phosphoserine modification is found at S1121.

This chain is Cordon-bleu protein-like 1, found in Homo sapiens (Human).